Reading from the N-terminus, the 440-residue chain is 23S rRNA (uracil(1939)-C(5))-methyltransferase RlmD (440 aa).

A disordered region spans residues Met-1–Ile-21. The region spanning Pro-15–Asn-73 is the TRAM domain. Positions 86, 92, 95, and 169 each coordinate [4Fe-4S] cluster. S-adenosyl-L-methionine is bound by residues Gln-273, Phe-302, Asn-307, Glu-323, Asp-350, and Asp-370. Cys-396 serves as the catalytic Nucleophile.

This sequence belongs to the class I-like SAM-binding methyltransferase superfamily. RNA M5U methyltransferase family. RlmD subfamily.

It catalyses the reaction uridine(1939) in 23S rRNA + S-adenosyl-L-methionine = 5-methyluridine(1939) in 23S rRNA + S-adenosyl-L-homocysteine + H(+). Functionally, catalyzes the formation of 5-methyl-uridine at position 1939 (m5U1939) in 23S rRNA. This is 23S rRNA (uracil(1939)-C(5))-methyltransferase RlmD from Marinomonas sp. (strain MWYL1).